A 204-amino-acid polypeptide reads, in one-letter code: Large ribosomal subunit protein uL4 (204 aa).

Residues 48 to 75 are disordered; sequence HTKGRSDVSGGGKKPWRQKGRGGARAGS.

The protein belongs to the universal ribosomal protein uL4 family. Part of the 50S ribosomal subunit.

One of the primary rRNA binding proteins, this protein initially binds near the 5'-end of the 23S rRNA. It is important during the early stages of 50S assembly. It makes multiple contacts with different domains of the 23S rRNA in the assembled 50S subunit and ribosome. Functionally, forms part of the polypeptide exit tunnel. This is Large ribosomal subunit protein uL4 from Campylobacter fetus subsp. fetus (strain 82-40).